Reading from the N-terminus, the 206-residue chain is Alpha-S1-casein (206 aa).

Positions 1-15 (MKLLIFICLAAVALA) are cleaved as a signal peptide. Residues serine 33, serine 77, serine 78, serine 79, serine 80, serine 81, serine 82, and serine 89 each carry the phosphoserine modification. A disordered region spans residues 67-106 (HGMEGHEQRGSSSSSSEEVVGNSAEQKHVQKEEDVPSQSY). Positions 91–100 (EQKHVQKEED) are enriched in basic and acidic residues.

It belongs to the alpha-casein family. Mammary gland specific. Secreted in milk.

Its subcellular location is the secreted. Important role in the capacity of milk to transport calcium phosphate. The protein is Alpha-S1-casein (CSN1S1) of Sus scrofa (Pig).